We begin with the raw amino-acid sequence, 426 residues long: Zinc finger CCCH domain-containing protein 15 (426 aa).

Residues 1-12 (MPPKKQAQAGGS) are compositionally biased toward low complexity. Disordered regions lie at residues 1–30 (MPPK…KTFG) and 53–74 (GQQN…KDDK). Basic and acidic residues predominate over residues 13–29 (KKAEQKKKEKIIEDKTF). Positions 53 to 62 (GQQNPRQVAQ) are enriched in polar residues. A coiled-coil region spans residues 61–86 (AQSEAEKKLKKDDKKKELQELNELFK). Positions 64-74 (EAEKKLKKDDK) are enriched in basic and acidic residues. 2 consecutive C3H1-type zinc fingers follow at residues 99-126 (DPKS…HDLT) and 174-212 (PKTQ…HALP). Positions 218–285 (KKDKKKEEKE…RRKADFKAGK (68 aa)) form a coiled coil. Ser-231 carries the phosphoserine modification. Residues 236–260 (IERERSALGPNVTKITLESFLAWKK) are required for interaction with DRG1. The tract at residues 299–326 (PELVNDDDEEADDTRYTQGTGGDEVDDS) is disordered. Phosphoserine occurs at positions 351, 360, and 381. The interval 358 to 411 (YTSDKDENKLSEASGGRAENGERSDLEEDNEREGTENGAIDAVPVDENLFTGED) is disordered.

It belongs to the ZC3H15/TMA46 family. Interacts with DRG1; this interaction prevents DRG1 poly-ubiquitination and degradation by proteasome. DRG1-ZC3H15/DFRP1 complex co-sediments with polysomes. Associates with microtubules.

The protein resides in the cytoplasm. It localises to the nucleus. Protects DRG1 from proteolytic degradation. Stimulates DRG1 GTPase activity likely by increasing the affinity for the potassium ions. In Homo sapiens (Human), this protein is Zinc finger CCCH domain-containing protein 15 (ZC3H15).